The primary structure comprises 741 residues: NUT family member 2G (741 aa).

Disordered regions lie at residues 172 to 200 (PGNA…PDDS), 293 to 375 (IQKS…PEEI), 391 to 424 (LGSH…SDPG), 496 to 624 (RAAP…LPGM), and 638 to 741 (RLSQ…HCSQ). Over residues 304–321 (SLPPPAPPRLEPRGPPAP) the composition is skewed to pro residues. Positions 402–412 (EGQREKGKVEQ) are enriched in basic and acidic residues. Residues 528–545 (QRVSVETSPPQTAAQDPQ) are compositionally biased toward polar residues. The span at 639-650 (LSQSPVPSSGLL) shows a compositional bias: low complexity. Basic residues predominate over residues 731-741 (SRRKKKRHCSQ).

The protein belongs to the NUT family.

This Homo sapiens (Human) protein is NUT family member 2G (NUTM2G).